Reading from the N-terminus, the 436-residue chain is Enolase (436 aa).

Gln167 provides a ligand contact to (2R)-2-phosphoglycerate. Glu209 serves as the catalytic Proton donor. Mg(2+)-binding residues include Asp246, Glu291, and Asp318. Residues Lys343, Arg372, Ser373, and Lys394 each contribute to the (2R)-2-phosphoglycerate site. The active-site Proton acceptor is the Lys343.

This sequence belongs to the enolase family. As to quaternary structure, component of the RNA degradosome, a multiprotein complex involved in RNA processing and mRNA degradation. The cofactor is Mg(2+).

The protein localises to the cytoplasm. It localises to the secreted. It is found in the cell surface. It catalyses the reaction (2R)-2-phosphoglycerate = phosphoenolpyruvate + H2O. The protein operates within carbohydrate degradation; glycolysis; pyruvate from D-glyceraldehyde 3-phosphate: step 4/5. Its function is as follows. Catalyzes the reversible conversion of 2-phosphoglycerate (2-PG) into phosphoenolpyruvate (PEP). It is essential for the degradation of carbohydrates via glycolysis. This Actinobacillus pleuropneumoniae serotype 5b (strain L20) protein is Enolase.